We begin with the raw amino-acid sequence, 1296 residues long: DNA-directed RNA polymerase subunit beta' (1296 aa).

Cys-60, Cys-62, Cys-75, and Cys-78 together coordinate Zn(2+). Residues 185-202 are compositionally biased toward basic and acidic residues; sequence EEEGGKAAEKRKLRDSAD. The disordered stretch occupies residues 185–204; sequence EEEGGKAAEKRKLRDSADRQ. Residues Asp-535, Asp-537, and Asp-539 each coordinate Mg(2+). The Zn(2+) site is built by Cys-877, Cys-954, Cys-961, and Cys-964.

The protein belongs to the RNA polymerase beta' chain family. As to quaternary structure, the RNAP catalytic core consists of 2 alpha, 1 beta, 1 beta' and 1 omega subunit. When a sigma factor is associated with the core the holoenzyme is formed, which can initiate transcription. The cofactor is Mg(2+). Requires Zn(2+) as cofactor.

The enzyme catalyses RNA(n) + a ribonucleoside 5'-triphosphate = RNA(n+1) + diphosphate. Functionally, DNA-dependent RNA polymerase catalyzes the transcription of DNA into RNA using the four ribonucleoside triphosphates as substrates. The protein is DNA-directed RNA polymerase subunit beta' of Kocuria rhizophila (strain ATCC 9341 / DSM 348 / NBRC 103217 / DC2201).